Reading from the N-terminus, the 213-residue chain is Transcriptional regulatory protein YdfI (213 aa).

Residues 3–118 enclose the Response regulatory domain; it reads KVLIVDDHLV…TLFHTMDAAI (116 aa). Position 54 is a 4-aspartylphosphate (Asp-54). Residues 142–207 form the HTH luxR-type domain; it reads KQRNETQLTE…EAVTIAMQKG (66 aa). A DNA-binding region (H-T-H motif) is located at residues 166–185; that stretch reads SKAIAFDLGVSERTVKSRLT.

Post-translationally, phosphorylated by YdfH.

Its subcellular location is the cytoplasm. Functionally, member of the two-component regulatory system YdfH/YdfI. Regulates the transcription of ydfJ by binding to its promoter region. The sequence is that of Transcriptional regulatory protein YdfI (ydfI) from Bacillus subtilis (strain 168).